The sequence spans 360 residues: DNA replication and repair protein RecF (360 aa).

Residue 33–40 (GENGSGKT) coordinates ATP.

It belongs to the RecF family.

It localises to the cytoplasm. The RecF protein is involved in DNA metabolism; it is required for DNA replication and normal SOS inducibility. RecF binds preferentially to single-stranded, linear DNA. It also seems to bind ATP. This chain is DNA replication and repair protein RecF, found in Rickettsia akari (strain Hartford).